A 155-amino-acid chain; its full sequence is Small ribosomal subunit protein uS7cz/uS7cy (155 aa).

It belongs to the universal ribosomal protein uS7 family. In terms of assembly, part of the 30S ribosomal subunit.

It localises to the plastid. The protein resides in the chloroplast. Functionally, one of the primary rRNA binding proteins, it binds directly to 16S rRNA where it nucleates assembly of the head domain of the 30S subunit. The polypeptide is Small ribosomal subunit protein uS7cz/uS7cy (rps7-A) (Piper cenocladum (Ant piper)).